The sequence spans 313 residues: Ribosomal RNA small subunit methyltransferase H (313 aa).

Residues 35 to 37 (GGH), aspartate 55, phenylalanine 79, aspartate 100, and glutamine 107 each bind S-adenosyl-L-methionine.

It belongs to the methyltransferase superfamily. RsmH family.

The protein resides in the cytoplasm. It catalyses the reaction cytidine(1402) in 16S rRNA + S-adenosyl-L-methionine = N(4)-methylcytidine(1402) in 16S rRNA + S-adenosyl-L-homocysteine + H(+). Functionally, specifically methylates the N4 position of cytidine in position 1402 (C1402) of 16S rRNA. The protein is Ribosomal RNA small subunit methyltransferase H of Burkholderia pseudomallei (strain K96243).